Here is a 231-residue protein sequence, read N- to C-terminus: Large ribosomal subunit protein uL1 (231 aa).

The protein belongs to the universal ribosomal protein uL1 family. Part of the 50S ribosomal subunit.

Functionally, binds directly to 23S rRNA. The L1 stalk is quite mobile in the ribosome, and is involved in E site tRNA release. In terms of biological role, protein L1 is also a translational repressor protein, it controls the translation of the L11 operon by binding to its mRNA. The sequence is that of Large ribosomal subunit protein uL1 from Ectopseudomonas mendocina (strain ymp) (Pseudomonas mendocina).